We begin with the raw amino-acid sequence, 616 residues long: Centrosomal protein of 70 kDa (616 aa).

2 coiled-coil regions span residues 96–210 (EETT…EEER) and 273–335 (NYKG…NIKL). A TPR repeat occupies 502–535 (NGVFPRMNEVYTRLGEMNNAVRNLQELLELDSSS).

Directly interacts with tubulin-gamma; this interaction determines centrosomal localization.

Its subcellular location is the cytoplasm. It is found in the cytoskeleton. The protein resides in the microtubule organizing center. The protein localises to the centrosome. Its function is as follows. Plays a role in the organization of both preexisting and nascent microtubules in interphase cells. During mitosis, required for the organization and orientation of the mitotic spindle. The protein is Centrosomal protein of 70 kDa (Cep70) of Mus musculus (Mouse).